Reading from the N-terminus, the 707-residue chain is Choline transporter-like protein 4 (707 aa).

Topologically, residues 1-33 are cytoplasmic; sequence MGGKQDQDKEAYGKPAKYDPSFRGPIRNRSCTD. The helical transmembrane segment at 34 to 54 threads the bilayer; that stretch reads IICCVLFFLFILGYIAVGILA. Topologically, residues 55–227 are extracellular; the sequence is WVYGDPKQVL…KIFEDFAQSW (173 aa). Asparagine 68, asparagine 185, and asparagine 196 each carry an N-linked (GlcNAc...) asparagine glycan. Residues 228–248 traverse the membrane as a helical segment; that stretch reads YWILIALGLALVLSLLFILLL. At 249 to 250 the chain is on the cytoplasmic side; it reads RL. The chain crosses the membrane as a helical span at residues 251–271; it reads VAGPLVFVLIIGVLGVLAYGI. The Extracellular portion of the chain corresponds to 272 to 307; the sequence is YHCWEEYRVLRDKGASISQLGFTTNLSAYRNVQETW. N-linked (GlcNAc...) asparagine glycosylation occurs at asparagine 296. The chain crosses the membrane as a helical span at residues 308–328; sequence LAALIILAVLEGVLLLMLIFL. Topologically, residues 329–356 are cytoplasmic; sequence RQRICIAIALLKEASRAVGYIMSTMFYP. The helical transmembrane segment at 357-377 threads the bilayer; it reads LVTFALLLVCIAYWAIIALFL. Topologically, residues 378 to 452 are extracellular; it reads ATSGQPQYVF…AVLGLFWTIN (75 aa). N-linked (GlcNAc...) asparagine glycans are attached at residues asparagine 391, asparagine 403, and asparagine 413. Residues 453–473 form a helical membrane-spanning segment; that stretch reads WVLALGQCVLAGAFASFYWAF. The Cytoplasmic portion of the chain corresponds to 474 to 498; the sequence is HKPRDIPTFPLGSAFLRTLRYHTGS. A helical membrane pass occupies residues 499-519; it reads LAFGALILTLVQIARVILEYI. Residues 520–557 lie on the Extracellular side of the membrane; sequence DHKLRGAQNPLTRCILCCFKCCLWCLEKFIKFLNRNAY. Residues 558–578 traverse the membrane as a helical segment; it reads IMIAIYGKNFCVSAKNAFMLL. The Cytoplasmic segment spans residues 579–594; sequence MRNIVRVVVLDKVTDL. Residues 595-615 form a helical membrane-spanning segment; the sequence is LLFFGKLLVVGGVGVLSFFFF. The Extracellular segment spans residues 616–635; it reads TGRIPSLGKTFENPQLNYYW. Residues 636 to 656 traverse the membrane as a helical segment; it reads LPIMVSILGAYLIASGFFSVF. Over 657 to 707 the chain is Cytoplasmic; it reads GMCVDTLFLCFLEDLERNDGSADRPYYMSKSLLKILGKKNKGTPGDKKRKK.

It belongs to the CTL (choline transporter-like) family. N-glycosylated; N-glycosylation of Asn-68 and Asn-391 is required for a proper thiamine pyrophosphate uptake.

The protein resides in the membrane. The protein localises to the apical cell membrane. The enzyme catalyses choline(out) + n H(+)(in) = choline(in) + n H(+)(out). It carries out the reaction thiamine diphosphate(out) = thiamine diphosphate(in). Its function is as follows. Choline transporter that plays a role in the choline-acetylcholine system and is required to the efferent innervation of hair cells in the olivocochlear bundle for the maintenance of physiological function of outer hair cells and the protection of hair cells from acoustic injury. Also described as a thiamine pyrophosphate transporter in colon, may mediate the absorption of microbiota-generated thiamine pyrophosphate and contribute to host thiamine (vitamin B1) homeostasis. The chain is Choline transporter-like protein 4 from Bos taurus (Bovine).